The following is a 156-amino-acid chain: AP-1 complex subunit sigma-1 (156 aa).

The protein belongs to the adaptor complexes small subunit family. In terms of assembly, adaptor protein complex 1 (AP-1) is a heterotetramer composed of two large adaptins (gamma-type subunit and beta-type subunit), a medium adaptin (mu-type subunit) and a small adaptin (sigma-type subunit).

It localises to the golgi apparatus. It is found in the trans-Golgi network. The protein resides in the cytoplasmic vesicle. The protein localises to the clathrin-coated vesicle membrane. Subunit of clathrin-associated adaptor protein complex 1 that plays a role in protein sorting in the trans-Golgi network (TGN) and endosomes. The AP complexes mediate the recruitment of clathrin to membranes and the recognition of sorting signals within the cytosolic tails of transmembrane cargo molecules. Also involved in early steps of phagocytosis and macropinocytosis. The sequence is that of AP-1 complex subunit sigma-1 (ap1s1) from Dictyostelium discoideum (Social amoeba).